The following is a 418-amino-acid chain: Aminodeoxyfutalosine deaminase (418 aa).

The Zn(2+) site is built by His-97 and His-99. Substrate-binding residues include Glu-173 and His-211. His-238 contacts Zn(2+). Glu-241 serves as the catalytic Proton donor. Asp-352 contacts Zn(2+).

This sequence belongs to the metallo-dependent hydrolases superfamily. Zn(2+) serves as cofactor.

It catalyses the reaction 6-amino-6-deoxyfutalosine + H2O + H(+) = futalosine + NH4(+). The protein operates within quinol/quinone metabolism; menaquinone biosynthesis. Functionally, catalyzes the deamination of aminodeoxyfutalosine (AFL) into futalosine (FL). To a lesser extent, can also deaminate 5'-deoxyadenosine, 5'-methylthioadenosine, 2'-deoxyadenosine, adenosine, 1-(6-amino-9H-purin-9-yl)-1-deoxy-N-ethyl-beta-D-ribofuranuronamide (NECA), and S-adenosylhomocysteine. The polypeptide is Aminodeoxyfutalosine deaminase (Deinococcus radiodurans (strain ATCC 13939 / DSM 20539 / JCM 16871 / CCUG 27074 / LMG 4051 / NBRC 15346 / NCIMB 9279 / VKM B-1422 / R1)).